We begin with the raw amino-acid sequence, 251 residues long: Appressoria-specific virulence factor GAS1 (251 aa).

The signal sequence occupies residues 1-21 (MSLKSLIAATILAAPLVAGHG). The interval 40-76 (VTSTPRDGTRRDPFQQDSTRFKGQQADTFGETVGGGQ) is disordered. Positions 54–66 (QQDSTRFKGQQAD) are enriched in polar residues.

The protein localises to the cytoplasm. Functionally, appressoria-specific virulence factor required for appressorial penetration in host and lesion development. This Pyricularia oryzae (strain 70-15 / ATCC MYA-4617 / FGSC 8958) (Rice blast fungus) protein is Appressoria-specific virulence factor GAS1.